The following is a 202-amino-acid chain: FMN-dependent NADH:quinone oxidoreductase (202 aa).

FMN is bound by residues serine 10 and 95-98; that span reads MYNF.

This sequence belongs to the azoreductase type 1 family. In terms of assembly, homodimer. The cofactor is FMN.

The catalysed reaction is 2 a quinone + NADH + H(+) = 2 a 1,4-benzosemiquinone + NAD(+). It catalyses the reaction N,N-dimethyl-1,4-phenylenediamine + anthranilate + 2 NAD(+) = 2-(4-dimethylaminophenyl)diazenylbenzoate + 2 NADH + 2 H(+). Its function is as follows. Quinone reductase that provides resistance to thiol-specific stress caused by electrophilic quinones. In terms of biological role, also exhibits azoreductase activity. Catalyzes the reductive cleavage of the azo bond in aromatic azo compounds to the corresponding amines. The sequence is that of FMN-dependent NADH:quinone oxidoreductase from Alkalilimnicola ehrlichii (strain ATCC BAA-1101 / DSM 17681 / MLHE-1).